Consider the following 352-residue polypeptide: MYLQGTKQTFLENMNGTENLTTSLINNTCHDTIDEFRNQVYSTMYSVISVVGFFGNSFVLYVLIKTYHEKSAFQVYMINLAIADLLCVCTLPLRVVYYVHKGKWLFGDFLCRLTTYALYVNLYCSIFFMTAMSFFRCVAIVFPVQNINLVTQKKARFVCIGIWIFVILTSSPFLMYKSYQDEKNNTKCFEPPQNNQAKKYVLILHYVSLFFGFIIPFVTIIVCYTMIILTLLKNTMKKNMPSRRKAIGMIIVVTAAFLVSFMPYHIQRTIHLHLLHSETRPCDSVLRMQKSVVITLSLAASNCCFDPLLYFFSGGNFRRRLSTFRKHSLSSMTYVPKKKASLPEKGEEICNE.

Residues Met1–Thr43 lie on the Extracellular side of the membrane. 3 N-linked (GlcNAc...) asparagine glycosylation sites follow: Asn15, Asn19, and Asn26. A helical membrane pass occupies residues Met44–Ile64. Over Lys65–Ala72 the chain is Cytoplasmic. The chain crosses the membrane as a helical span at residues Phe73–Leu93. Residues Arg94–Asn121 lie on the Extracellular side of the membrane. A disulfide bridge links Cys111 with Cys188. The chain crosses the membrane as a helical span at residues Leu122–Phe142. The Cytoplasmic segment spans residues Pro143–Arg156. Residues Phe157–Lys177 form a helical membrane-spanning segment. Residues Ser178 to Ser208 lie on the Extracellular side of the membrane. The N-linked (GlcNAc...) asparagine glycan is linked to Asn184. A helical membrane pass occupies residues Leu209–Leu229. Residues Thr230 to Lys245 are Cytoplasmic-facing. A helical transmembrane segment spans residues Ala246–Ile266. Residues Gln267 to Ser291 lie on the Extracellular side of the membrane. The chain crosses the membrane as a helical span at residues Val292 to Phe312. Residues Ser313–Glu352 are Cytoplasmic-facing.

The protein belongs to the G-protein coupled receptor 1 family. Widely expressed, with higher expression in the lung and skin, intermediate levels in the heart, kidney and stomach and lower levels in several other tissues. Isoform 1 is the most abundant form in all tested tissues.

It localises to the cell membrane. Receptor for cysteinyl leukotrienes mediating constriction of the microvascular smooth muscle during an inflammatory response. This response is mediated via a G-protein that activates a phosphatidylinositol-calcium second messenger system. The rank order of affinities for the leukotrienes is LTD4 &gt;&gt; LTE4 = LTC4 &gt;&gt; LTB4. This Mus musculus (Mouse) protein is Cysteinyl leukotriene receptor 1 (Cysltr1).